A 260-amino-acid polypeptide reads, in one-letter code: Metallo-beta-lactamase domain-containing protein 1 (260 aa).

The Zn(2+) site is built by histidine 118, histidine 120, aspartate 122, histidine 123, histidine 173, aspartate 196, and histidine 235.

This sequence belongs to the metallo-beta-lactamase superfamily. Glyoxalase II family. In terms of assembly, homodimer. Requires Zn(2+) as cofactor.

The protein resides in the cytoplasm. It localises to the cytosol. The protein localises to the nucleus. The catalysed reaction is a ribonucleotidyl-ribonucleotide-RNA + H2O = a 3'-end ribonucleotide-RNA + a 5'-end 5'-phospho-ribonucleoside-RNA + H(+). Endoribonuclease that catalyzes the hydrolysis of histone-coding pre-mRNA 3'-end. Involved in histone pre-mRNA processing during the S-phase of the cell cycle, which is required for entering/progressing through S-phase. Cleaves histone pre-mRNA at a major and a minor cleavage site after the 5'-ACCCA-3' and the 5'-ACCCACA-3' sequence, respectively, and located downstream of the stem-loop. May require the presence of the HDE element located at the histone pre-RNA 3'-end to avoid non-specific cleavage. This chain is Metallo-beta-lactamase domain-containing protein 1, found in Mus musculus (Mouse).